The chain runs to 394 residues: Phosphopentomutase (394 aa).

Residues Asp13, Asp286, His291, Asp327, His328, and His339 each coordinate Mn(2+).

It belongs to the phosphopentomutase family. Requires Mn(2+) as cofactor.

It localises to the cytoplasm. It carries out the reaction 2-deoxy-alpha-D-ribose 1-phosphate = 2-deoxy-D-ribose 5-phosphate. It catalyses the reaction alpha-D-ribose 1-phosphate = D-ribose 5-phosphate. It participates in carbohydrate degradation; 2-deoxy-D-ribose 1-phosphate degradation; D-glyceraldehyde 3-phosphate and acetaldehyde from 2-deoxy-alpha-D-ribose 1-phosphate: step 1/2. Functionally, isomerase that catalyzes the conversion of deoxy-ribose 1-phosphate (dRib-1-P) and ribose 1-phosphate (Rib-1-P) to deoxy-ribose 5-phosphate (dRib-5-P) and ribose 5-phosphate (Rib-5-P), respectively. The protein is Phosphopentomutase of Bacillus cereus (strain B4264).